Consider the following 562-residue polypeptide: SPI-1 type 3 secretion system secretin (562 aa).

The signal sequence occupies residues 1–24 (MKTHILLARVLACAALVLVTPGYS).

It belongs to the bacterial secretin family. T3SS SctC subfamily. In terms of assembly, the core secretion machinery of the T3SS is composed of approximately 20 different proteins, including cytoplasmic components, a base, an export apparatus and a needle. This subunit is part of the base, which anchors the injectisome in the bacterial cell envelope. Forms a stable homooligomeric complex. The complex is composed of 15 subunits.

It localises to the cell outer membrane. Component of the type III secretion system (T3SS), also called injectisome, which is used to inject bacterial effector proteins into eukaryotic host cells. Forms a ring-shaped multimeric structure with an apparent central pore in the outer membrane. This Salmonella typhimurium (strain LT2 / SGSC1412 / ATCC 700720) protein is SPI-1 type 3 secretion system secretin.